A 74-amino-acid polypeptide reads, in one-letter code: Exodeoxyribonuclease 7 small subunit (74 aa).

It belongs to the XseB family. As to quaternary structure, heterooligomer composed of large and small subunits.

It localises to the cytoplasm. The catalysed reaction is Exonucleolytic cleavage in either 5'- to 3'- or 3'- to 5'-direction to yield nucleoside 5'-phosphates.. Its function is as follows. Bidirectionally degrades single-stranded DNA into large acid-insoluble oligonucleotides, which are then degraded further into small acid-soluble oligonucleotides. The polypeptide is Exodeoxyribonuclease 7 small subunit (Neisseria meningitidis serogroup C / serotype 2a (strain ATCC 700532 / DSM 15464 / FAM18)).